The primary structure comprises 238 residues: Complement C1q-like protein 4 (238 aa).

An N-terminal signal peptide occupies residues Met1–Ser15. A disordered region spans residues Gly36 to Ala101. Positions Pro53–Gly96 constitute a Collagen-like domain. The span at Pro71–Gly96 shows a compositional bias: pro residues. The C1q domain occupies Gly105–Asp238.

Forms homooligomers, predominantly dimers or trimers. Forms heterooligomers with C1QL1, C1QL2 and C1QL3, when proteins are coexpressed; this interaction does not occur after secretion. Interacts with ADGRB3. In terms of tissue distribution, highest expression levels in testis and adipose tissue, lower levels in skeletal muscle and kidney.

The protein resides in the secreted. May regulate the number of excitatory synapses that are formed on hippocampus neurons. Has no effect on inhibitory synapses. May inhibit adipocyte differentiation at an early stage of the process. The chain is Complement C1q-like protein 4 (C1QL4) from Homo sapiens (Human).